We begin with the raw amino-acid sequence, 350 residues long: tRNA-splicing endonuclease (350 aa).

Catalysis depends on residues Y286, H297, and K328.

Belongs to the tRNA-intron endonuclease family. Archaeal long subfamily. As to quaternary structure, homodimer.

It catalyses the reaction pretRNA = a 3'-half-tRNA molecule with a 5'-OH end + a 5'-half-tRNA molecule with a 2',3'-cyclic phosphate end + an intron with a 2',3'-cyclic phosphate and a 5'-hydroxyl terminus.. Functionally, endonuclease that removes tRNA introns. Cleaves pre-tRNA at the 5'- and 3'-splice sites to release the intron. The products are an intron and two tRNA half-molecules bearing 2',3' cyclic phosphate and 5'-OH termini. Recognizes a pseudosymmetric substrate in which 2 bulged loops of 3 bases are separated by a stem of 4 bp. In Methanosarcina barkeri (strain Fusaro / DSM 804), this protein is tRNA-splicing endonuclease.